We begin with the raw amino-acid sequence, 157 residues long: Large ribosomal subunit protein uL10 (157 aa).

It belongs to the universal ribosomal protein uL10 family. Part of the ribosomal stalk of the 50S ribosomal subunit. The N-terminus interacts with L11 and the large rRNA to form the base of the stalk. The C-terminus forms an elongated spine to which L12 dimers bind in a sequential fashion forming a multimeric L10(L12)X complex.

Functionally, forms part of the ribosomal stalk, playing a central role in the interaction of the ribosome with GTP-bound translation factors. The protein is Large ribosomal subunit protein uL10 of Campylobacter hominis (strain ATCC BAA-381 / DSM 21671 / CCUG 45161 / LMG 19568 / NCTC 13146 / CH001A).